The chain runs to 89 residues: Co-chaperonin GroES (89 aa).

It belongs to the GroES chaperonin family. Heptamer of 7 subunits arranged in a ring. Interacts with the chaperonin GroEL.

Its subcellular location is the cytoplasm. In terms of biological role, together with the chaperonin GroEL, plays an essential role in assisting protein folding. The GroEL-GroES system forms a nano-cage that allows encapsulation of the non-native substrate proteins and provides a physical environment optimized to promote and accelerate protein folding. GroES binds to the apical surface of the GroEL ring, thereby capping the opening of the GroEL channel. In Porphyromonas gingivalis (strain ATCC 33277 / DSM 20709 / CIP 103683 / JCM 12257 / NCTC 11834 / 2561), this protein is Co-chaperonin GroES.